The sequence spans 172 residues: Protein GrpE (172 aa).

It belongs to the GrpE family. Homodimer.

It localises to the cytoplasm. Functionally, participates actively in the response to hyperosmotic and heat shock by preventing the aggregation of stress-denatured proteins, in association with DnaK and GrpE. It is the nucleotide exchange factor for DnaK and may function as a thermosensor. Unfolded proteins bind initially to DnaJ; upon interaction with the DnaJ-bound protein, DnaK hydrolyzes its bound ATP, resulting in the formation of a stable complex. GrpE releases ADP from DnaK; ATP binding to DnaK triggers the release of the substrate protein, thus completing the reaction cycle. Several rounds of ATP-dependent interactions between DnaJ, DnaK and GrpE are required for fully efficient folding. The protein is Protein GrpE of Thermotoga petrophila (strain ATCC BAA-488 / DSM 13995 / JCM 10881 / RKU-1).